The following is an 830-amino-acid chain: Heavy metal tolerance protein (830 aa).

An N-terminal signal peptide occupies residues 1–27 (MVLRYNSPRLNILELVLLYVGFFSIGS). 3 consecutive transmembrane segments (helical) span residues 51 to 71 (PIGI…VDIS), 88 to 108 (TTVV…ISCA), and 126 to 146 (LSVL…IVYS). The N-linked (GlcNAc...) asparagine glycan is linked to Asn150. 3 consecutive transmembrane segments (helical) span residues 156 to 176 (IVLA…AIYL), 263 to 283 (FQIF…ILAP), and 304 to 324 (DVIL…IGSL). Residues 265–550 (IFICIVLLFL…FGTLYRSLQN (286 aa)) form the ABC transmembrane type-1 domain. N-linked (GlcNAc...) asparagine glycosylation is present at Asn350. 2 consecutive transmembrane segments (helical) span residues 381-401 (VVFQ…YFFI) and 403-423 (FDIY…YVTV). Residues 429–433 (RTEAR), 492–495 (NIVQ), and Gly542 each bind glutathione. The helical transmembrane segment at 490-511 (FLNIVQGGIFTFSLAIACLLSA) threads the bilayer. Residues 584–818 (VIFSHVSFAY…DGGAYKKMWF (235 aa)) enclose the ABC transporter domain. ATP contacts are provided by residues Tyr593 and 617-628 (GESGGGKSTIMR).

Belongs to the ABC transporter superfamily. ABCB family. Heavy Metal importer (TC 3.A.1.210) subfamily.

It is found in the vacuole membrane. Involved in metal tolerance. Probably involved in the transport of metal-bound phytochelatins. Compartmentalizes cadmium within vacuoles, thereby protecting cells from cadmium toxicity. This Schizosaccharomyces pombe (strain 972 / ATCC 24843) (Fission yeast) protein is Heavy metal tolerance protein (hmt1).